Here is a 282-residue protein sequence, read N- to C-terminus: 2-dehydro-3-deoxyphosphooctonate aldolase (282 aa).

Belongs to the KdsA family.

The protein resides in the cytoplasm. It carries out the reaction D-arabinose 5-phosphate + phosphoenolpyruvate + H2O = 3-deoxy-alpha-D-manno-2-octulosonate-8-phosphate + phosphate. Its pathway is carbohydrate biosynthesis; 3-deoxy-D-manno-octulosonate biosynthesis; 3-deoxy-D-manno-octulosonate from D-ribulose 5-phosphate: step 2/3. It participates in bacterial outer membrane biogenesis; lipopolysaccharide biosynthesis. The polypeptide is 2-dehydro-3-deoxyphosphooctonate aldolase (Shewanella sp. (strain ANA-3)).